A 261-amino-acid polypeptide reads, in one-letter code: Putative imidazole glycerol phosphate synthase subunit hisF2 (261 aa).

Residue Asp-138 is part of the active site.

The protein belongs to the HisA/HisF family. In terms of assembly, heterodimer of HisH and HisF.

It localises to the cytoplasm. It carries out the reaction 5-[(5-phospho-1-deoxy-D-ribulos-1-ylimino)methylamino]-1-(5-phospho-beta-D-ribosyl)imidazole-4-carboxamide + L-glutamine = D-erythro-1-(imidazol-4-yl)glycerol 3-phosphate + 5-amino-1-(5-phospho-beta-D-ribosyl)imidazole-4-carboxamide + L-glutamate + H(+). It participates in amino-acid biosynthesis; L-histidine biosynthesis; L-histidine from 5-phospho-alpha-D-ribose 1-diphosphate: step 5/9. Functionally, IGPS catalyzes the conversion of PRFAR and glutamine to IGP, AICAR and glutamate. The HisF subunit catalyzes the cyclization activity that produces IGP and AICAR from PRFAR using the ammonia provided by the HisH subunit. The polypeptide is Putative imidazole glycerol phosphate synthase subunit hisF2 (hisF2) (Prochlorococcus marinus (strain MIT 9313)).